The following is a 1496-amino-acid chain: DNA-directed RNA polymerase subunit beta' (1496 aa).

Residues cysteine 70, cysteine 72, cysteine 85, and cysteine 88 each coordinate Zn(2+). The Mg(2+) site is built by aspartate 461, aspartate 463, and aspartate 465. Zn(2+) is bound by residues cysteine 908, cysteine 982, cysteine 989, and cysteine 992. A disordered region spans residues 1467-1496; it reads DKDMQVEGESEVPAIPPVAEGSAPEAPPAE.

Belongs to the RNA polymerase beta' chain family. In terms of assembly, the RNAP catalytic core consists of 2 alpha, 1 beta, 1 beta' and 1 omega subunit. When a sigma factor is associated with the core the holoenzyme is formed, which can initiate transcription. It depends on Mg(2+) as a cofactor. Zn(2+) is required as a cofactor.

It carries out the reaction RNA(n) + a ribonucleoside 5'-triphosphate = RNA(n+1) + diphosphate. Its function is as follows. DNA-dependent RNA polymerase catalyzes the transcription of DNA into RNA using the four ribonucleoside triphosphates as substrates. The polypeptide is DNA-directed RNA polymerase subunit beta' (Paramagnetospirillum magneticum (strain ATCC 700264 / AMB-1) (Magnetospirillum magneticum)).